The chain runs to 275 residues: Intercellular adhesion molecule 2 (275 aa).

The first 24 residues, 1–24, serve as a signal peptide directing secretion; that stretch reads MSSFGYRTLTVALFALICCPGSDE. The Extracellular segment spans residues 25 to 223; the sequence is KVFEVHVRPK…EIYEPVSDSQ (199 aa). Positions 41-98 constitute an Ig-like C2-type 1 domain; it reads KASLEVNCSTTCNQPEVGGLETSLDKILLDEQAQWKHYLVSNISHDTVLQCHFTCSGK. Asparagine 47, asparagine 82, asparagine 105, asparagine 153, asparagine 158, asparagine 176, and asparagine 187 each carry an N-linked (GlcNAc...) asparagine glycan. Cystine bridges form between cysteine 48–cysteine 91 and cysteine 52–cysteine 95. The Ig-like C2-type 2 domain occupies 127–197; it reads GKSFTIECRV…FSCLAVLDLI (71 aa). Cysteine 134 and cysteine 190 are disulfide-bonded. Residues 224–248 traverse the membrane as a helical segment; sequence MVIIVTVVSVLLSLFVTSVLLCFIF. Topologically, residues 249-275 are cytoplasmic; the sequence is GQHLRQQRMGTYGVRAAWRRLPQAFRP. Residues 251 to 275 form a required for interaction with EZR, MSN and RDX and co-localization to microvilli region; sequence HLRQQRMGTYGVRAAWRRLPQAFRP.

This sequence belongs to the immunoglobulin superfamily. ICAM family. In terms of assembly, interacts with RDX, EZR and MSN.

It is found in the membrane. Its subcellular location is the cell projection. It localises to the microvillus. Functionally, ICAM proteins are ligands for the leukocyte adhesion protein LFA-1 (integrin alpha-L/beta-2). ICAM2 may play a role in lymphocyte recirculation by blocking LFA-1-dependent cell adhesion. It mediates adhesive interactions important for antigen-specific immune response, NK-cell mediated clearance, lymphocyte recirculation, and other cellular interactions important for immune response and surveillance. This chain is Intercellular adhesion molecule 2 (ICAM2), found in Gorilla gorilla gorilla (Western lowland gorilla).